The following is a 668-amino-acid chain: E3 ubiquitin-protein ligase RNF139 (668 aa).

The residue at position 2 (Ala2) is an N-acetylalanine. Transmembrane regions (helical) follow at residues 51-71 (IGLQ…VLIL), 85-105 (AFLL…HIDF), 125-145 (SLWM…VTLL), 154-174 (LMIL…PLHI), 178-198 (VVLM…AVKL), 293-313 (GMSA…LAFI), 323-343 (LGFV…LSGL), 356-376 (MCLL…PVLM), 390-410 (FPVL…SYVL), 420-440 (LFAV…SLTV), and 470-490 (IIEF…MMFE). The RING-type; atypical zinc finger occupies 547-586 (CAICYHEFTTSARITPCNHYFHALCLRKWLYIQDTCPMCH). Positions 602 to 668 (SNNNGFIAPN…AAAEFNDDTD (67 aa)) are disordered. The span at 618–630 (EALREDAAGSDRE) shows a compositional bias: basic and acidic residues. Acidic residues predominate over residues 631 to 641 (LNEDDSTDCDD). Position 636 is a phosphoserine (Ser636). 2 positions are modified to phosphothreonine: Thr637 and Thr667.

In terms of assembly, interacts with VHL. Interacts with MHC class I and HM13. Component of SCAP-SREBP complex composed of SREBF2, SCAP and RNF139; the complex hampers the interaction between SCAP and SEC24B, thereby reducing SREBF2 proteolytic processing. Interacts with SREBF2 (via C-terminal domain). Interacts with SCAP; the interaction inhibits the interaction of SCAP with SEC24B and hampering the ER to Golgi transport of the SCAP-SREBP complex. Interacts with SEC24B. Interacts with INSIG1 and INSIG2. Interacts with EIF3F and EIF3H; the interaction leads to protein translation inhibitions in a ubiquitination-dependent manner. Interacts with XBP1 isoform 1; the interaction induces ubiquitination and degradation of XBP1 isoform 1. Interacts with AUP1, AMFR and UBE2G2; interaction with AUP1 facilitates interaction of RNF139 with ubiquitin-conjugating enzyme UBE2G2 and ubiquitin ligase AMFR/gp78, leading to sterol-induced ubiquitination of HMGCR and its subsequent proteasomal degradation. Post-translationally, autoubiquitinated. Ubiquitination is induced by sterol and leads to ist degradation via the ubiquitin-proteasome pathway.

The protein localises to the endoplasmic reticulum membrane. It catalyses the reaction S-ubiquitinyl-[E2 ubiquitin-conjugating enzyme]-L-cysteine + [acceptor protein]-L-lysine = [E2 ubiquitin-conjugating enzyme]-L-cysteine + N(6)-ubiquitinyl-[acceptor protein]-L-lysine.. It participates in protein modification; protein ubiquitination. Functionally, E3-ubiquitin ligase; acts as a negative regulator of cell proliferation through mechanisms involving G2/M arrest and cell death. Required for MHC class I ubiquitination in cells expressing the cytomegalovirus protein US2 before dislocation from the endoplasmic reticulum (ER). Affects SREBP processing by hindering the SREBP-SCAP complex translocation from the ER to the Golgi, thereby reducing SREBF2 target gene expression. Involved in the sterol-accelerated degradation of HMGCR. This is achieved through binding to INSIG1 and/or INSIG2 at the ER membrane. In addition, interaction of RNF139 with AUP1 facilitates interaction of RNF139 with ubiquitin-conjugating enzyme UBE2G2 and ubiquitin ligase AMFR, leading to ubiquitination of HMGCR. The ubiquitinated HMGCR is then released from the ER by the complex into the cytosol for subsequent destruction. Required for INSIG1 ubiquitination. May be required for EIF3 complex ubiquitination. The protein is E3 ubiquitin-protein ligase RNF139 of Mus musculus (Mouse).